The chain runs to 537 residues: Putative cysteine ligase BshC (537 aa).

Residues 422–450 (IEKVEGMIEQQRRLNKDLLDEVAGNQNNI) are a coiled coil.

Belongs to the BshC family.

Involved in bacillithiol (BSH) biosynthesis. May catalyze the last step of the pathway, the addition of cysteine to glucosamine malate (GlcN-Mal) to generate BSH. This Staphylococcus aureus (strain COL) protein is Putative cysteine ligase BshC.